The chain runs to 936 residues: Translation initiation factor IF-2 (936 aa).

The segment at 102–332 (PEPGPVLKKD…SGSRQKFRKM (231 aa)) is disordered. Over residues 108 to 119 (LKKDHVHEEPEK) the composition is skewed to basic and acidic residues. The span at 127-137 (SEPEVEPEVEP) shows a compositional bias: acidic residues. Positions 151 to 160 (PTEAVSVPEP) are enriched in low complexity. Polar residues predominate over residues 182–194 (QSSTMKAQASPEM). Basic and acidic residues-rich tracts occupy residues 217–227 (SALDRGSESDR) and 237–267 (KEQA…EAKT). Positions 272-281 (KAAGTTGSAA) are enriched in low complexity. Over residues 287-297 (SKKKKGGKKKK) the composition is skewed to basic residues. The region spanning 433 to 603 (IRPPVVTIMG…LMEAEIRELK (171 aa)) is the tr-type G domain. The tract at residues 442–449 (GHVDHGKT) is G1. 442 to 449 (GHVDHGKT) provides a ligand contact to GTP. The G2 stretch occupies residues 467–471 (GITQH). Residues 489–492 (DTPG) form a G3 region. GTP-binding positions include 489-493 (DTPGH) and 543-546 (NKID). A G4 region spans residues 543–546 (NKID). The G5 stretch occupies residues 579–581 (SAK).

The protein belongs to the TRAFAC class translation factor GTPase superfamily. Classic translation factor GTPase family. IF-2 subfamily.

The protein localises to the cytoplasm. Its function is as follows. One of the essential components for the initiation of protein synthesis. Protects formylmethionyl-tRNA from spontaneous hydrolysis and promotes its binding to the 30S ribosomal subunits. Also involved in the hydrolysis of GTP during the formation of the 70S ribosomal complex. The polypeptide is Translation initiation factor IF-2 (Prosthecochloris aestuarii (strain DSM 271 / SK 413)).